A 365-amino-acid polypeptide reads, in one-letter code: Undecaprenyl-phosphate alpha-N-acetylglucosaminyl 1-phosphate transferase (365 aa).

10 helical membrane passes run 3–23, 45–65, 99–119, 132–152, 157–177, 187–207, 213–233, 242–262, 293–313, and 315–335; these read LLTMSTELIYIFLFSMAFLFV, GLIPLVGGISVFAGVCFAFLI, IRAFVQALVGIAMMAVAGLYL, VLGPFGYVVTLFAVWAAINAF, GIDGLLGGLSCVSFGAMGILL, LWCFAMIATIIPYILLNLGLL, VFMGDAGSTLIGFTAIWILLQ, INPVTALWIIAIPLMDMIAIM, QAFVLITLAAALLAMIGVIGE, and LTFIPEWVMLALFLLAFLLYG.

Belongs to the glycosyltransferase 4 family. WecA subfamily. It depends on Mg(2+) as a cofactor. The cofactor is Mn(2+).

It localises to the cell inner membrane. The catalysed reaction is di-trans,octa-cis-undecaprenyl phosphate + UDP-N-acetyl-alpha-D-glucosamine = N-acetyl-alpha-D-glucosaminyl-di-trans,octa-cis-undecaprenyl diphosphate + UMP. The protein operates within bacterial outer membrane biogenesis; LPS O-antigen biosynthesis. It participates in bacterial outer membrane biogenesis; enterobacterial common antigen biosynthesis. Functionally, catalyzes the transfer of the GlcNAc-1-phosphate moiety from UDP-GlcNAc onto the carrier lipid undecaprenyl phosphate (C55-P), yielding GlcNAc-pyrophosphoryl-undecaprenyl (GlcNAc-PP-C55). This Yersinia pestis protein is Undecaprenyl-phosphate alpha-N-acetylglucosaminyl 1-phosphate transferase.